The sequence spans 395 residues: Flap endonuclease 1 (395 aa).

The interval 1–104 (MGIKHLYQVI…GELAKRSARK (104 aa)) is N-domain. Asp34 is a Mg(2+) binding site. DNA-binding residues include Arg47 and Arg70. Residue Asp86 coordinates Mg(2+). Residues 99–126 (KRSARKREAHEAHEEAKETGTAEDMEKF) are disordered. An I-domain region spans residues 122–253 (DMEKFSRRTV…NTALKLIREH (132 aa)). Residues Glu158, Glu160, Asp179, and Asp181 each coordinate Mg(2+). Residue Glu158 participates in DNA binding. Residues Gly231 and Asp233 each coordinate DNA. Asp233 is a binding site for Mg(2+). An interaction with PCNA region spans residues 341–349 (QQSRLEGFF). Positions 356-389 (EAEKASLKRKHDEKIEEQKKRKKEEAKAKKEAKA) are enriched in basic and acidic residues. The tract at residues 356-395 (EAEKASLKRKHDEKIEEQKKRKKEEAKAKKEAKARPRGAV) is disordered.

Belongs to the XPG/RAD2 endonuclease family. FEN1 subfamily. In terms of assembly, interacts with PCNA. Three molecules of fen1 bind to one PCNA trimer with each molecule binding to one PCNA monomer. PCNA stimulates the nuclease activity without altering cleavage specificity. Mg(2+) serves as cofactor. Post-translationally, phosphorylated. Phosphorylation upon DNA damage induces relocalization to the nuclear plasma.

The protein resides in the nucleus. The protein localises to the nucleolus. Its subcellular location is the nucleoplasm. It is found in the mitochondrion. Structure-specific nuclease with 5'-flap endonuclease and 5'-3' exonuclease activities involved in DNA replication and repair. During DNA replication, cleaves the 5'-overhanging flap structure that is generated by displacement synthesis when DNA polymerase encounters the 5'-end of a downstream Okazaki fragment. It enters the flap from the 5'-end and then tracks to cleave the flap base, leaving a nick for ligation. Also involved in the long patch base excision repair (LP-BER) pathway, by cleaving within the apurinic/apyrimidinic (AP) site-terminated flap. Acts as a genome stabilization factor that prevents flaps from equilibrating into structures that lead to duplications and deletions. Also possesses 5'-3' exonuclease activity on nicked or gapped double-stranded DNA, and exhibits RNase H activity. Also involved in replication and repair of rDNA and in repairing mitochondrial DNA. The polypeptide is Flap endonuclease 1 (fen1) (Talaromyces stipitatus (strain ATCC 10500 / CBS 375.48 / QM 6759 / NRRL 1006) (Penicillium stipitatum)).